A 201-amino-acid chain; its full sequence is Pyridoxal 5'-phosphate synthase subunit PdxT (201 aa).

49 to 51 lines the L-glutamine pocket; the sequence is GES. The active-site Nucleophile is the Cys81. Residues Arg110 and 139 to 140 each bind L-glutamine; that span reads IR. Catalysis depends on charge relay system residues His175 and Glu177.

Belongs to the glutaminase PdxT/SNO family. In the presence of PdxS, forms a dodecamer of heterodimers. Only shows activity in the heterodimer.

It catalyses the reaction aldehydo-D-ribose 5-phosphate + D-glyceraldehyde 3-phosphate + L-glutamine = pyridoxal 5'-phosphate + L-glutamate + phosphate + 3 H2O + H(+). The enzyme catalyses L-glutamine + H2O = L-glutamate + NH4(+). It functions in the pathway cofactor biosynthesis; pyridoxal 5'-phosphate biosynthesis. Its function is as follows. Catalyzes the hydrolysis of glutamine to glutamate and ammonia as part of the biosynthesis of pyridoxal 5'-phosphate. The resulting ammonia molecule is channeled to the active site of PdxS. The protein is Pyridoxal 5'-phosphate synthase subunit PdxT of Streptomyces avermitilis (strain ATCC 31267 / DSM 46492 / JCM 5070 / NBRC 14893 / NCIMB 12804 / NRRL 8165 / MA-4680).